Reading from the N-terminus, the 448-residue chain is Phosphoglucosamine mutase (448 aa).

Residue Ser-101 is the Phosphoserine intermediate of the active site. 4 residues coordinate Mg(2+): Ser-101, Asp-241, Asp-243, and Asp-245. Position 101 is a phosphoserine (Ser-101).

The protein belongs to the phosphohexose mutase family. Mg(2+) serves as cofactor. Post-translationally, activated by phosphorylation.

The enzyme catalyses alpha-D-glucosamine 1-phosphate = D-glucosamine 6-phosphate. Functionally, catalyzes the conversion of glucosamine-6-phosphate to glucosamine-1-phosphate. In Macrococcus caseolyticus (strain JCSC5402) (Macrococcoides caseolyticum), this protein is Phosphoglucosamine mutase.